Reading from the N-terminus, the 112-residue chain is MKKRFISVCAIAIALLVSLTPAALAADLANGAKVFSGNCAACHMGGGNVVMANKTLKKEALEQFGMYSEDAIIYQVQHGKNAMPAFAGRLTDEQIQDVAAYVLDQAAKGWAG.

An N-terminal signal peptide occupies residues 1–25 (MKKRFISVCAIAIALLVSLTPAALA). Positions 39, 42, 43, and 83 each coordinate heme c.

It belongs to the cytochrome c family. PetJ subfamily. As to quaternary structure, monomer. Binds 1 heme c group covalently per subunit.

It localises to the cellular thylakoid lumen. Functions as an electron carrier between membrane-bound cytochrome b6-f and photosystem I in oxygenic photosynthesis. The chain is Cytochrome c6 (petJ) from Thermosynechococcus vestitus (strain NIES-2133 / IAM M-273 / BP-1).